The primary structure comprises 320 residues: MAHNHSHTESGNSKRLLAAFIITATFMVAEVIGGLLSGSLALLADAGHMLTDAAALFVALVAVRFAQRKPNARHTFGYLRLTTLAAFVNALTLILITAFIFWEAIQRFYDPQPVAGVPMLLVAIAGLLANIVAFWLLHHGSEEKNINVRAAALHVLGDLLGSVGAIAAAIIILYTNWTPIDPILSILVSCLVLRSAWALLKESIHELLEGTPSQLSVEALQKDVTLNIPEVRNIHHVHLWQVGEKPMMTLHAQVVPPHDHDALLRRIQEYLLKHYQIEHATIQMEYQRCDDDHCSFHQENHHLAIHDGEKHDAEGHHHKH.

A run of 6 helical transmembrane segments spans residues 16–36, 43–63, 85–105, 117–137, 153–173, and 180–200; these read LLAA…GGLL, LADA…LVAV, AAFV…WEAI, VPML…FWLL, LHVL…IIIL, and IDPI…WALL.

It belongs to the cation diffusion facilitator (CDF) transporter (TC 2.A.4) family. SLC30A subfamily.

It localises to the cell inner membrane. In terms of biological role, involved in zinc efflux across the cytoplasmic membrane, thus reducing zinc accumulation in the cytoplasm and rendering bacteria more resistant to zinc. It may contribute to zinc homeostasis at low concentrations of zinc. This Pectobacterium atrosepticum (strain SCRI 1043 / ATCC BAA-672) (Erwinia carotovora subsp. atroseptica) protein is Zinc transporter ZitB.